The primary structure comprises 298 residues: Protoheme IX farnesyltransferase (298 aa).

Transmembrane regions (helical) follow at residues 16–36 (VVALIVFTALVGMFLAIPGMP), 45–65 (ALGFLGIWLAASAAAAINQLL), 97–117 (VLIVISMTILVVWVNVITAVL), 141–161 (IVIGGLAGATPPMLGWAAVTG), 172–192 (SLLVLIIFIWTPPHFWALAIF), 223–243 (VLLAIVTLLPVAVGMSGVFYL), 244–264 (GGAVVLNAVFLWYAWRMLDPP), and 277–297 (VVYLMALFAFLMVDHLLLPWV).

The protein belongs to the UbiA prenyltransferase family. Protoheme IX farnesyltransferase subfamily.

The protein localises to the cell inner membrane. The catalysed reaction is heme b + (2E,6E)-farnesyl diphosphate + H2O = Fe(II)-heme o + diphosphate. Its pathway is porphyrin-containing compound metabolism; heme O biosynthesis; heme O from protoheme: step 1/1. Functionally, converts heme B (protoheme IX) to heme O by substitution of the vinyl group on carbon 2 of heme B porphyrin ring with a hydroxyethyl farnesyl side group. This Xanthomonas campestris pv. campestris (strain 8004) protein is Protoheme IX farnesyltransferase.